Consider the following 104-residue polypeptide: Toxin-like protein 14 (104 aa).

The signal sequence occupies residues 1-25; sequence MNTYNARLYIFSLALALVILKGTKC.

Contains 4 disulfide bonds. As to expression, expressed by the venom gland.

The protein resides in the secreted. In Urodacus yaschenkoi (Inland robust scorpion), this protein is Toxin-like protein 14.